Here is a 125-residue protein sequence, read N- to C-terminus: Aspercryptin biosynthesis cluster protein K (125 aa).

Residues 104 to 125 (QRAESVAGDSRPREHRQGAVGY) are disordered. Residues 113–125 (SRPREHRQGAVGY) show a composition bias toward basic and acidic residues.

Its pathway is secondary metabolite biosynthesis. Its function is as follows. Part of the gene cluster that mediates the biosynthesis of aspercryptins, linear lipopeptides built from six amino acids including 2 highly unusual and nonproteogenic amino acids, 2-amino-octanoic acid (2aoa) and 2-amino-dodecanol (2adol). The core structure of aspercryptins is as follows: Ser/Ala-Thr-Ile/Val-2aoa-Asn-2adol. The first step of aspercryptin biosynthesis is the generation of the fatty acid precursors, octanoic and dodecanoic acids, by the FAS subunits atnF and atnM. The fatty acid precursors are likely transformed into the corresponding alpha-amino fatty acids in three steps. First, they are hydroxylated by the cytochrome P450 monooxygenase atnE, then oxidized to the corresponding alpha-keto acids by the NAD(P)-dependent oxidoreductase atnD, and finally converted to the alpha-amino fatty acids by the PLP-dependent aminotransferases atnH or atnJ. the alpha-amino fatty acids, 2-amino-octanoic and 2-amino-dodecanoic acids, are recognized, activated, and covalently tethered to the NRPS atnA by its fourth and sixth adenylation domains. The second module of atnA is the Thr module and contains an epimerase (E) domain responsible for the epimerization of Thr to D-allo-Thr. Additionally, despite atnA having only one epimerase domain, the first amino acid of aspercryptin A1 is D-Ser, suggesting that serine is either loaded directly as D-Ser on the first module or that the epimerase domain in the threonine module epimerizes both L-Ser and L-Thr. After condensation of the hexapeptide of aspercryptin, the C-terminal reductase (TE) domain might be involved in the reductive release and production of the aldehyde hexapeptide. Further reduction would generate aspercryptins. The variety of aspercryptins produced reflects the flexibility of the atnA NRPS, allowing incorporation of alanine instead of serine, valine for isoleucine, and a C10 fatty amino alcohol instead of the C12 version. AtnB seems to be involved in the selectivity for Ile versus Val by the third module. Moreover, type B, C and D aspercryptins have an additional N-terminal cichorine, acetyl and propionyl group respectively. The protein is Aspercryptin biosynthesis cluster protein K of Emericella nidulans (strain FGSC A4 / ATCC 38163 / CBS 112.46 / NRRL 194 / M139) (Aspergillus nidulans).